Reading from the N-terminus, the 159-residue chain is 2-C-methyl-D-erythritol 2,4-cyclodiphosphate synthase (159 aa).

A divalent metal cation is bound by residues Asp-8 and His-10. 4-CDP-2-C-methyl-D-erythritol 2-phosphate is bound by residues 8–10 (DVH) and 34–35 (HS). His-42 provides a ligand contact to a divalent metal cation. 4-CDP-2-C-methyl-D-erythritol 2-phosphate-binding positions include 56-58 (DIG), 61-65 (FPDTD), 100-106 (AQAPKML), 132-135 (TTTE), Phe-139, and Arg-142.

This sequence belongs to the IspF family. As to quaternary structure, homotrimer. The cofactor is a divalent metal cation.

The enzyme catalyses 4-CDP-2-C-methyl-D-erythritol 2-phosphate = 2-C-methyl-D-erythritol 2,4-cyclic diphosphate + CMP. It participates in isoprenoid biosynthesis; isopentenyl diphosphate biosynthesis via DXP pathway; isopentenyl diphosphate from 1-deoxy-D-xylulose 5-phosphate: step 4/6. Its function is as follows. Involved in the biosynthesis of isopentenyl diphosphate (IPP) and dimethylallyl diphosphate (DMAPP), two major building blocks of isoprenoid compounds. Catalyzes the conversion of 4-diphosphocytidyl-2-C-methyl-D-erythritol 2-phosphate (CDP-ME2P) to 2-C-methyl-D-erythritol 2,4-cyclodiphosphate (ME-CPP) with a corresponding release of cytidine 5-monophosphate (CMP). In Klebsiella pneumoniae (strain 342), this protein is 2-C-methyl-D-erythritol 2,4-cyclodiphosphate synthase.